Here is a 474-residue protein sequence, read N- to C-terminus: tRNA-2-methylthio-N(6)-dimethylallyladenosine synthase (474 aa).

The MTTase N-terminal domain occupies 3 to 120 (KKLHIKTWGC…LPEMINSVRG (118 aa)). Residues Cys-12, Cys-49, Cys-83, Cys-157, Cys-161, and Cys-164 each coordinate [4Fe-4S] cluster. The 233-residue stretch at 143-375 (RAEGPTAFVS…QERINQQAMA (233 aa)) folds into the Radical SAM core domain. The TRAM domain occupies 378–441 (RRMLGTTQRI…PNSLRGKVVR (64 aa)).

This sequence belongs to the methylthiotransferase family. MiaB subfamily. Monomer. [4Fe-4S] cluster serves as cofactor.

The protein localises to the cytoplasm. It catalyses the reaction N(6)-dimethylallyladenosine(37) in tRNA + (sulfur carrier)-SH + AH2 + 2 S-adenosyl-L-methionine = 2-methylsulfanyl-N(6)-dimethylallyladenosine(37) in tRNA + (sulfur carrier)-H + 5'-deoxyadenosine + L-methionine + A + S-adenosyl-L-homocysteine + 2 H(+). Functionally, catalyzes the methylthiolation of N6-(dimethylallyl)adenosine (i(6)A), leading to the formation of 2-methylthio-N6-(dimethylallyl)adenosine (ms(2)i(6)A) at position 37 in tRNAs that read codons beginning with uridine. The sequence is that of tRNA-2-methylthio-N(6)-dimethylallyladenosine synthase from Escherichia coli O81 (strain ED1a).